A 162-amino-acid polypeptide reads, in one-letter code: UPF0114 protein PSPA7_5214 (162 aa).

3 helical membrane passes run 15–35, 53–73, and 136–156; these read LLAP…IKFF, LILV…LVMV, and LMWY…MGYL.

It belongs to the UPF0114 family.

It is found in the cell membrane. The protein is UPF0114 protein PSPA7_5214 of Pseudomonas paraeruginosa (strain DSM 24068 / PA7) (Pseudomonas aeruginosa (strain PA7)).